The following is a 684-amino-acid chain: Glycine--tRNA ligase beta subunit (684 aa).

This sequence belongs to the class-II aminoacyl-tRNA synthetase family. In terms of assembly, tetramer of two alpha and two beta subunits.

Its subcellular location is the cytoplasm. It catalyses the reaction tRNA(Gly) + glycine + ATP = glycyl-tRNA(Gly) + AMP + diphosphate. The polypeptide is Glycine--tRNA ligase beta subunit (Pseudomonas fluorescens (strain SBW25)).